A 151-amino-acid chain; its full sequence is Gametocyte-specific factor 1-like (151 aa).

CHHC U11-48K-type zinc fingers lie at residues 6–33 and 40–67; these read IEICPYNPHHRIPLSRFQYHLASCRKKN and MASCKYNACHVVPIRKLAEHEATCVNRS. 8 residues coordinate Zn(2+): C9, H15, H25, C29, C43, H49, H59, and C63. The disordered stretch occupies residues 130-151; that stretch reads QESRGGDQCPEDPQTRTRKANF.

This sequence belongs to the UPF0224 (FAM112) family.

The chain is Gametocyte-specific factor 1-like (Gtsf1l) from Mus musculus (Mouse).